The primary structure comprises 287 residues: MSSSMLNFTASRIVSLPLLSSPPSRVHLPLCFFSPISLTQRFSAKLTFSSQATTMGEVVDAGMDAVQRRLMFEDECILVDENDKVVGHESKYNCHLMEKIESENLLHRAFSVFLFNSKYELLLQQRSATKVTFPLVWTNTCCSHPLYRESELIDENCLGVRNAAQRKLLDELGIPAEDLPVDQFIPLSRILYKAPSDGKWGEHELDYLLFIIRDVNLDPNPDEVAEVKYMNRDDLKELLRKADAEEEGVKLSPWFRLVVDNFLFKWWDHVEKGSLKDAADMKTIHKL.

Positions 105–257 (LLHRAFSVFL…GVKLSPWFRL (153 aa)) constitute a Nudix hydrolase domain. Catalysis depends on residues C142 and Y207.

The protein belongs to the IPP isomerase type 1 family.

The enzyme catalyses isopentenyl diphosphate = dimethylallyl diphosphate. Its pathway is isoprenoid biosynthesis; dimethylallyl diphosphate biosynthesis; dimethylallyl diphosphate from isopentenyl diphosphate: step 1/1. It participates in porphyrin-containing compound metabolism; chlorophyll biosynthesis. Its function is as follows. Catalyzes the 1,3-allylic rearrangement of the homoallylic substrate isopentenyl (IPP) to its highly electrophilic allylic isomer, dimethylallyl diphosphate (DMAPP). The polypeptide is Isopentenyl-diphosphate Delta-isomerase I (IPI1) (Clarkia breweri (Fairy fans)).